The sequence spans 52 residues: Phospholamban (52 aa).

Met-1 carries the N-acetylmethionine modification. The Cytoplasmic segment spans residues 1–31 (MEKVQYLTRSAIRRASTIEMPQQARQKLQNL). Position 16 is a phosphoserine; by PKA and DMPK (Ser-16). Residues 16-22 (STIEMPQ) are involved in HAX1 binding. Thr-17 carries the phosphothreonine; by CaMK2 modification. A helical membrane pass occupies residues 32-52 (FINFCLILICLLLICIIVMLL). Cys-36 carries S-palmitoyl cysteine lipidation.

The protein belongs to the phospholamban family. In terms of assembly, homopentamer. Can also form heterooligomers with other sarcoplasmic/endoplasmic reticulum calcium ATPase (SERCA) regulators ARLN, ERLN, SLN and STRIT1/DWORF. Monomer. Interacts with HAX1. Interacts as a monomer with ATP2A2; the interaction decreases ATP2A2 Ca(2+) affinity. Interacts with VMP1; VMP1 competes with PLN and SLN to prevent them from forming an inhibitory complex with ATP2A2. Interacts with S100A1 in a Ca(2+)-dependent manner. Post-translationally, phosphorylation by PKA abolishes the inhibition of ATP2A2-mediated calcium uptake. Phosphorylated at Thr-17 by CaMK2, and in response to beta-adrenergic stimulation. Phosphorylation by DMPK may stimulate sarcoplasmic reticulum calcium uptake in cardiomyocytes. In terms of processing, palmitoylated by ZDHHC16, promoting formation of the homopentamer. In elongated spermatids, proteolytically cleaved by SPPL2C which modulates intracellular Ca(2+) homeostasis. In terms of tissue distribution, heart muscle (at protein level).

It is found in the endoplasmic reticulum membrane. The protein resides in the sarcoplasmic reticulum membrane. It localises to the mitochondrion membrane. Its subcellular location is the membrane. Reversibly inhibits the activity of ATP2A2/SERCA2 in cardiac sarcoplasmic reticulum by decreasing the apparent affinity of the ATPase for Ca(2+). Binds preferentially to the ATP-bound E1 conformational form of ATP2A2 which predominates at low Ca(2+) concentrations during the diastolic phase of the cardiac cycle. Inhibits ATP2A2 Ca(2+) affinity by disrupting its allosteric activation by ATP. Modulates the contractility of the heart muscle in response to physiological stimuli via its effects on ATP2A2. Modulates calcium re-uptake during muscle relaxation and plays an important role in calcium homeostasis in the heart muscle. The degree of ATP2A2 inhibition depends on the oligomeric state of PLN. ATP2A2 inhibition is alleviated by PLN phosphorylation. Also inhibits the activity of ATP2A3/SERCA3. Controls intracellular Ca(2+) levels in elongated spermatids and may play a role in germ cell differentiation. In the thalamic reticular nucleus of the brain, plays a role in the regulation of sleep patterns and executive functioning. In Homo sapiens (Human), this protein is Phospholamban.